The primary structure comprises 238 residues: Triggering receptor expressed on myeloid cells 1 (238 aa).

The signal sequence occupies residues Met1–Ala20. The region spanning Ala21 to Val129 is the Ig-like V-type domain. Residues Ala21–Leu210 lie on the Extracellular side of the membrane. A disulfide bridge connects residues Cys41 and Cys113. The N-linked (GlcNAc...) asparagine glycan is linked to Asn135. Residues Pro141–Arg169 are disordered. Positions Thr146 to Thr163 are enriched in low complexity. Asn198 is a glycosylation site (N-linked (GlcNAc...) asparagine). The chain crosses the membrane as a helical span at residues Ile211 to Val231. Residues Thr232–Pro238 are Cytoplasmic-facing.

As to quaternary structure, monomer. Homomultimer; when activated. Interacts with TYROBP/DAP12. Interacts with TLR4.

The protein resides in the cell membrane. Its function is as follows. Cell surface receptor that plays important roles in innate and adaptive immunity by amplifying inflammatory responses. Upon activation by various ligands such as PGLYRP1, HMGB1 or HSP70, multimerizes and forms a complex with transmembrane adapter TYROBP/DAP12. In turn, initiates a SYK-mediated cascade of tyrosine phosphorylation, activating multiple downstream mediators such as BTK, MAPK1, MAPK3 or phospholipase C-gamma. This cascade promotes the neutrophil- and macrophage-mediated release of pro-inflammatory cytokines and/or chemokines, as well as their migration and thereby amplifies inflammatory responses that are triggered by bacterial and fungal infections. By also promoting the amplification of inflammatory signals that are initially triggered by Toll-like receptor (TLR) and NOD-like receptor engagement, plays a major role in the pathophysiology of acute and chronic inflammatory diseases of different etiologies including septic shock and atherosclerosis. This chain is Triggering receptor expressed on myeloid cells 1 (TREM1), found in Sus scrofa (Pig).